The primary structure comprises 741 residues: Zinc finger protein 425 (741 aa).

Positions 1–69 (DDVALYFSGQ…EQGCLDKTRR (69 aa)) constitute a KRAB domain. Disordered stretches follow at residues 67–86 (TRRT…DTGK) and 128–169 (RRDT…TPGR). A compositionally biased stretch (polar residues) spans 132–151 (FQSPSLQETEIPNKKVSITA). Residues 153 to 168 (DPDKKDLRHKPRETPG) are compositionally biased toward basic and acidic residues. 19 C2H2-type zinc fingers span residues 179–201 (YSCY…KRSH), 235–257 (FQCS…QVVH), 263–285 (YPCP…LCLH), 291–313 (FCCG…LRLH), 319–341 (FQCP…LSQH), 347–369 (FHCP…QRTH), 375–397 (FSCD…IRVH), 403–425 (FSCP…GLQH), 431–453 (FQCP…QRLH), 459–481 (FPCA…TRVH), 487–509 (FPCG…LKVH), 515–537 (FSCA…TRLH), 543–565 (FQCP…QRMH), 571–593 (FACS…LRLH), 599–621 (YQCP…LLQH), 627–649 (FSCV…IRVH), 655–677 (FQCP…LYTH), 683–705 (FQCP…LCLH), and 711–733 (FSCD…IAVH).

This sequence belongs to the krueppel C2H2-type zinc-finger protein family.

The protein resides in the nucleus. It is found in the cytoplasm. Acts as a transcriptional repressor. The polypeptide is Zinc finger protein 425 (ZNF425) (Macaca fascicularis (Crab-eating macaque)).